The chain runs to 711 residues: Choline transporter-like protein 2 (711 aa).

The Cytoplasmic segment spans residues 1–33 (MGDERPHYYGKHGTPQKYDPTFKGPIYNRGCTD). Position 14 is a phosphothreonine (Thr-14). A helical transmembrane segment spans residues 34 to 54 (VICCVFLLVAIVGYVAVGIIA). Topologically, residues 55–232 (WTHGDPRKVI…RIFEDYTVSW (178 aa)) are extracellular. Residues Asn-187 and Asn-200 are each glycosylated (N-linked (GlcNAc...) asparagine). The chain crosses the membrane as a helical span at residues 233-253 (YWIIIGLVIAMAMSLLFIILL). The Cytoplasmic portion of the chain corresponds to 254–256 (RFL). The chain crosses the membrane as a helical span at residues 257-277 (AGIMVWVMIIMVILVLGYGIF). Residues 278–315 (HCYMEYSRLRGEAGSDVSLVDLGFQTDFRVYLHLRQTW) lie on the Extracellular side of the membrane. The helical transmembrane segment at 316–336 (LAFMIILSILEVIIILLLIFL) threads the bilayer. Topologically, residues 337-364 (RKRILIAIALIKEASRAVGYVMCTMLYP) are cytoplasmic. The helical transmembrane segment at 365–385 (LVTFFLLCLCIAYWASTAVFL) threads the bilayer. Residues 386-440 (STSNEAVYKIFDDGLCPFTAKTCNPETFPSSNESRQCPNARCQFAFYGGESGYHR) are Extracellular-facing. The N-linked (GlcNAc...) asparagine glycan is linked to Asn-417. The helical transmembrane segment at 441–461 (ALLGLQIFNAFMFFWLANFVL) threads the bilayer. At 462–504 (ALGQVTLAGAFASYYWALRKPDDLPAFPLFSAFGRALRYHTGS) the chain is on the cytoplasmic side. Residues 505–525 (LAFGALILAIVQIIRVILEYL) traverse the membrane as a helical segment. The Extracellular portion of the chain corresponds to 526-563 (DQRLKAAENKFAKCLMTCLKCCFWCLEKFIKFLNRNAY). Residues 564 to 584 (IMIAIYGTNFCTSARNAFFLL) traverse the membrane as a helical segment. Residues 585–599 (MRNIIRVAVLDKVTD) lie on the Cytoplasmic side of the membrane. The helical transmembrane segment at 600-620 (FLFLLGKLLIVGSVGILAFFF) threads the bilayer. The Extracellular segment spans residues 621–638 (FTHRIRIVQDTAPPLNYY). The helical transmembrane segment at 639–659 (WVPILTVIVGSYLIAHGFFSV) threads the bilayer. The Cytoplasmic segment spans residues 660 to 711 (YGMCVDTLFLCFCEDLERNDGSQERPYFMSPELRDILLKGSAEEGKRAEAEE).

The protein belongs to the CTL (choline transporter-like) family. In terms of assembly, interacts with COCH. N-glycosylated.

It is found in the cell membrane. Its subcellular location is the mitochondrion outer membrane. It carries out the reaction choline(out) + n H(+)(in) = choline(in) + n H(+)(out). The enzyme catalyses ethanolamine(out) + n H(+)(in) = ethanolamine(in) + n H(+)(out). Its function is as follows. Choline/H+ antiporter, mainly in mitochodria. Also acts as a low-affinity ethanolamine/H+ antiporter, regulating the supply of extracellular ethanolamine (Etn) for the CDP-Etn pathway, redistribute intracellular Etn and balance the CDP-Cho and CDP-Etn arms of the Kennedy pathway. This Pongo abelii (Sumatran orangutan) protein is Choline transporter-like protein 2 (SLC44A2).